A 300-amino-acid polypeptide reads, in one-letter code: Glycine--tRNA ligase alpha subunit (300 aa).

Belongs to the class-II aminoacyl-tRNA synthetase family. Tetramer of two alpha and two beta subunits.

The protein localises to the cytoplasm. It carries out the reaction tRNA(Gly) + glycine + ATP = glycyl-tRNA(Gly) + AMP + diphosphate. The chain is Glycine--tRNA ligase alpha subunit from Pseudoalteromonas translucida (strain TAC 125).